Consider the following 212-residue polypeptide: Molybdenum cofactor guanylyltransferase (212 aa).

Residues 14 to 16 (LAG), K27, N55, D73, and D108 contribute to the GTP site. Position 108 (D108) interacts with Mg(2+).

This sequence belongs to the MobA family. As to quaternary structure, monomer. It depends on Mg(2+) as a cofactor.

Its subcellular location is the cytoplasm. The catalysed reaction is Mo-molybdopterin + GTP + H(+) = Mo-molybdopterin guanine dinucleotide + diphosphate. In terms of biological role, transfers a GMP moiety from GTP to Mo-molybdopterin (Mo-MPT) cofactor (Moco or molybdenum cofactor) to form Mo-molybdopterin guanine dinucleotide (Mo-MGD) cofactor. This Bradyrhizobium sp. (strain ORS 278) protein is Molybdenum cofactor guanylyltransferase.